A 59-amino-acid polypeptide reads, in one-letter code: Large ribosomal subunit protein bL32c (59 aa).

A disordered region spans residues 36 to 59 (KSRSFSGVSEHPKPKGFSRQQTNK).

Belongs to the bacterial ribosomal protein bL32 family.

It is found in the plastid. The protein resides in the chloroplast. This Oryza nivara (Indian wild rice) protein is Large ribosomal subunit protein bL32c.